A 31-amino-acid chain; its full sequence is Cyclotide mech-5 (31 aa).

A cross-link (cyclopeptide (Gly-Asp)) is located at residues 1–31; it reads GVIPCGESCVFIPCISSVVGCTCKNKVCYRD. 3 disulfides stabilise this stretch: C5–C21, C9–C23, and C14–C28.

This is a cyclic peptide. In terms of processing, contains 3 disulfide bonds.

Its function is as follows. Probably participates in a plant defense mechanism (Potential). Binds to and induces leakage in phospholipd membranes, particularly ones containing 1-palmitoyl-2-oleophosphatidylethanolamine (POPE). This is Cyclotide mech-5 from Melicytus chathamicus (Chatham Island mahoe).